The following is a 372-amino-acid chain: Methenyltetrahydrofolate synthase domain-containing protein (372 aa).

Basic and acidic residues predominate over residues 246–258 (KQAGKDVTLRDEP). The tract at residues 246–289 (KQAGKDVTLRDEPGSQQPAPGPIRRPQDRPQTGSRGGSRSPLQG) is disordered. The region spanning 296–369 (ATVCVGNLPF…NALRVSLGQQ (74 aa)) is the RRM domain.

In Mus musculus (Mouse), this protein is Methenyltetrahydrofolate synthase domain-containing protein (Mthfsd).